The following is a 111-amino-acid chain: SRA stem-loop-interacting RNA-binding protein, mitochondrial (111 aa).

The RRM domain maps to 19–96 (PVAFVRKIPW…VKLHVQPQRP (78 aa)). Residues 92–111 (QPQRPKALQGDQTSDEEKDF) form a disordered region. T104 bears the Phosphothreonine mark. A Phosphoserine modification is found at S105.

It localises to the mitochondrion. The protein localises to the nucleus. RNA-binding protein that acts as a nuclear receptor corepressor. Probably acts by binding the SRA RNA, and repressing the SRA-mediated nuclear receptor coactivation. Binds the STR7 loop of SRA RNA. Also able to repress glucocorticoid (GR), androgen (AR), thyroid (TR) and VDR-mediated transactivation. The protein is SRA stem-loop-interacting RNA-binding protein, mitochondrial (SLIRP) of Bos taurus (Bovine).